Here is a 236-residue protein sequence, read N- to C-terminus: Auxin-responsive protein IAA16 (236 aa).

Residues 9–13 (LRLGL) carry the EAR-like (transcriptional repression) motif. Residues 82–110 (KNVMSGQKPTTGDATEGNDKTSGSSGATS) form a disordered region. Polar residues predominate over residues 85 to 94 (MSGQKPTTGD). The PB1 domain occupies 118 to 218 (VAYVKVSMDG…SCKRIRIMKG (101 aa)).

Belongs to the Aux/IAA family. Homodimers and heterodimers.

The protein resides in the nucleus. In terms of biological role, aux/IAA proteins are short-lived transcriptional factors that function as repressors of early auxin response genes at low auxin concentrations. Repression is thought to result from the interaction with auxin response factors (ARFs), proteins that bind to the auxin-responsive promoter element (AuxRE). Formation of heterodimers with ARF proteins may alter their ability to modulate early auxin response genes expression. The sequence is that of Auxin-responsive protein IAA16 (IAA16) from Arabidopsis thaliana (Mouse-ear cress).